The primary structure comprises 541 residues: Chaperonin GroEL 2 (541 aa).

ATP is bound by residues 29–32, 86–90, Gly413, 476–478, and Asp492; these read TLGP, DGTTT, and NAA.

Belongs to the chaperonin (HSP60) family. In terms of assembly, forms a cylinder of 14 subunits composed of two heptameric rings stacked back-to-back. Interacts with the co-chaperonin GroES.

The protein localises to the secreted. The protein resides in the capsule. Its subcellular location is the cell surface. It is found in the cell wall. The catalysed reaction is ATP + H2O + a folded polypeptide = ADP + phosphate + an unfolded polypeptide.. Functionally, together with its co-chaperonin GroES, plays an essential role in assisting protein folding. The GroEL-GroES system forms a nano-cage that allows encapsulation of the non-native substrate proteins and provides a physical environment optimized to promote and accelerate protein folding. This Mycolicibacterium vanbaalenii (strain DSM 7251 / JCM 13017 / BCRC 16820 / KCTC 9966 / NRRL B-24157 / PYR-1) (Mycobacterium vanbaalenii) protein is Chaperonin GroEL 2.